A 679-amino-acid polypeptide reads, in one-letter code: DNA ligase (679 aa).

NAD(+)-binding positions include 41–45 (DSVYD), 90–91 (SL), and E120. K122 (N6-AMP-lysine intermediate) is an active-site residue. NAD(+)-binding residues include R143, E177, K293, and K317. Zn(2+) contacts are provided by C411, C414, C429, and C434. The region spanning 597–679 (DSNSWFAGKR…SETMREDAQA (83 aa)) is the BRCT domain.

The protein belongs to the NAD-dependent DNA ligase family. LigA subfamily. Requires Mg(2+) as cofactor. The cofactor is Mn(2+).

The catalysed reaction is NAD(+) + (deoxyribonucleotide)n-3'-hydroxyl + 5'-phospho-(deoxyribonucleotide)m = (deoxyribonucleotide)n+m + AMP + beta-nicotinamide D-nucleotide.. Functionally, DNA ligase that catalyzes the formation of phosphodiester linkages between 5'-phosphoryl and 3'-hydroxyl groups in double-stranded DNA using NAD as a coenzyme and as the energy source for the reaction. It is essential for DNA replication and repair of damaged DNA. This is DNA ligase from Lactiplantibacillus plantarum (strain ATCC BAA-793 / NCIMB 8826 / WCFS1) (Lactobacillus plantarum).